The following is a 430-amino-acid chain: Glutamate-1-semialdehyde 2,1-aminomutase (430 aa).

The residue at position 265 (lysine 265) is an N6-(pyridoxal phosphate)lysine.

It belongs to the class-III pyridoxal-phosphate-dependent aminotransferase family. HemL subfamily. As to quaternary structure, homodimer. The cofactor is pyridoxal 5'-phosphate.

It localises to the cytoplasm. The catalysed reaction is (S)-4-amino-5-oxopentanoate = 5-aminolevulinate. It functions in the pathway porphyrin-containing compound metabolism; protoporphyrin-IX biosynthesis; 5-aminolevulinate from L-glutamyl-tRNA(Glu): step 2/2. This chain is Glutamate-1-semialdehyde 2,1-aminomutase, found in Shewanella sp. (strain ANA-3).